The chain runs to 288 residues: Mortality factor 4-like protein 2 (288 aa).

The segment covering 1 to 15 has biased composition (polar residues); sequence MSSRKQASQTRGQQS. The segment at 1–115 is disordered; the sequence is MSSRKQASQT…DPTVESEEAF (115 aa). Ser-71 bears the Phosphoserine mark. The region spanning 117-288 is the MRG domain; it reads SRMEVKVKIP…ASADYHRKAL (172 aa).

In terms of assembly, component of the NuA4 histone acetyltransferase complex which contains the catalytic subunit KAT5/TIP60 and the subunits EP400, TRRAP/PAF400, BRD8/SMAP, EPC1, DMAP1/DNMAP1, RUVBL1/TIP49, RUVBL2, ING3, actin, ACTL6A/BAF53A, MORF4L1/MRG15, MORF4L2/MRGX, MRGBP, YEATS4/GAS41 and VPS72/YL1. The NuA4 complex interacts with MYC and the adenovirus E1A protein. MORF4L1 may also participate in the formation of NuA4 related complexes which lack the KAT5/TIP60 catalytic subunit, but which include the SWI/SNF related protein SRCAP. Component of the MSIN3A histone deacetylase complex, which includes SIN3A, HDAC2, ARID4B, MORF4L1, RBBP4/RbAp48, and RBBP7/RbAp46. Interacts with MRFAP1 and RB1. May also interact with one or more as yet undefined members of the TLE (transducin-like enhancer of split) family of transcriptional repressors.

Its subcellular location is the nucleus. Component of the NuA4 histone acetyltransferase complex which is involved in transcriptional activation of select genes principally by acetylation of nucleosomal histone H4 and H2A. This modification may both alter nucleosome - DNA interactions and promote interaction of the modified histones with other proteins which positively regulate transcription. This complex may be required for the activation of transcriptional programs associated with oncogene and proto-oncogene mediated growth induction, tumor suppressor mediated growth arrest and replicative senescence, apoptosis, and DNA repair. The NuA4 complex ATPase and helicase activities seem to be, at least in part, contributed by the association of RUVBL1 and RUVBL2 with EP400. NuA4 may also play a direct role in DNA repair when directly recruited to sites of DNA damage. Also a component of the MSIN3A complex which acts to repress transcription by deacetylation of nucleosomal histones. The protein is Mortality factor 4-like protein 2 (Morf4l2) of Mus musculus (Mouse).